Reading from the N-terminus, the 699-residue chain is Ferric reduction oxidase 4 (699 aa).

At 1 to 9 (MGNMRSLVK) the chain is on the cytoplasmic side. Residues 10–29 (TLMVVLFLGWILVWIMISTN) form a helical membrane-spanning segment. At 30–54 (LFKSKWTPKLSKYLNTTYFGPQGTN) the chain is on the lumenal side. The helical transmembrane segment at 55–73 (LVLLTVPMMFIAVLSCVYL) threads the bilayer. The Cytoplasmic segment spans residues 74 to 101 (HIQKKPTQPQREWKLKRIMGRVIMVMNP). A helical membrane pass occupies residues 102 to 125 (LGIVTATELTFSLLFVALLAWSLY). Residues 126-190 (NYLYLSYHVH…VGLTSESSIK (65 aa)) are Lumenal-facing. A Ferric oxidoreductase domain is found at 157–275 (GYVGNICWAF…HHLYGLYIVF (119 aa)). The chain crosses the membrane as a helical span at residues 191–214 (YHIWLGHVSNFCFLVHTVVFLIYW). 2 residues coordinate heme: histidine 192 and histidine 206. Residues 215–264 (AMINKLMETFAWNPTYVPNLAGTIAMVIGIAMWVTSLPSFRRKKFEIFFY) are Cytoplasmic-facing. A helical transmembrane segment spans residues 265–289 (THHLYGLYIVFYVIHVGDSWFCMIL). Heme is bound by residues histidine 266 and histidine 279. The Lumenal portion of the chain corresponds to 290 to 311 (PNIFLFFIDRYLRFLQSTKRSR). The region spanning 305 to 408 (QSTKRSRLVS…EGPYGPNSFD (104 aa)) is the FAD-binding FR-type domain. Residues 312 to 332 (LVSARILPSDNLELTFSKTPG) form a helical membrane-spanning segment. The Cytoplasmic portion of the chain corresponds to 333–525 (LHYTPTSILF…PISPVLGPNN (193 aa)). 354–357 (HPFT) is an FAD binding site. Residue 400 to 403 (GPYG) coordinates NAD(+). A helical transmembrane segment spans residues 526-548 (FLWLGVVILSSFVMFLLLIGIVT). At 549–568 (RYYIYPVDHNTGSIYNFSYR) the chain is on the lumenal side. The chain crosses the membrane as a helical span at residues 569–590 (GLWDMFLGSACIFISSSVVFLW). Residues 591–699 (RKKQNKEGDK…LHFEAISFNW (109 aa)) are Cytoplasmic-facing.

It belongs to the ferric reductase (FRE) family. FAD serves as cofactor. Expressed in siliques. Detected at low levels in roots, cotyledon veins and shoots.

It localises to the membrane. It carries out the reaction 2 a Fe(II)-siderophore + NAD(+) + H(+) = 2 a Fe(III)-siderophore + NADH. In terms of biological role, ferric chelate reductase. May participate in the transport of electrons to a Fe(3+) ion via FAD and heme intermediates. May function as root surface cupric chelate reductase and participate in the reduction of Cu(2+), for Cu(+) acquisition via Cu(+) transporters in response to copper deficiency. The chain is Ferric reduction oxidase 4 (FRO4) from Arabidopsis thaliana (Mouse-ear cress).